The sequence spans 359 residues: MSEQQQNITDLTLTELQQALSLLGEPAFRATQIHQWLFSHHAASFEEMTILSLALRKKLSESFSIHPLKRVEHQECFEEDCESPTEKILLELQDKSRVESVLIATENRRTACVSSQIGCPLQCPFCATGQMGFRRNLTAGEITGQIYALNELVGAKEPGKSLTNIVFMGMGEPLLNTGNVIEAIETLSTRNYRFCLSQKRITISTVGVIPEIQRLGKSGMKTKLAVSLHAADQQKRESLMPIASRQYPLKELGTALSEYTQSTGMPVTIVYLLLKGINDSLDDAKMLARFSKTFLCKINLIDYNSIINIKFKPVYSATRDMFQQYLINSGLHVTIRKSYGTTINAACGQLATASMQNPQ.

Glu99 (proton acceptor) is an active-site residue. Residues 105-342 (TENRRTACVS…VTIRKSYGTT (238 aa)) form the Radical SAM core domain. An intrachain disulfide couples Cys112 to Cys347. Positions 119, 123, and 126 each coordinate [4Fe-4S] cluster. Residues 171–172 (GE), Ser204, 227–229 (SLH), and Asn304 each bind S-adenosyl-L-methionine. Cys347 functions as the S-methylcysteine intermediate in the catalytic mechanism.

It belongs to the radical SAM superfamily. RlmN family. The cofactor is [4Fe-4S] cluster.

The protein localises to the cytoplasm. The enzyme catalyses adenosine(2503) in 23S rRNA + 2 reduced [2Fe-2S]-[ferredoxin] + 2 S-adenosyl-L-methionine = 2-methyladenosine(2503) in 23S rRNA + 5'-deoxyadenosine + L-methionine + 2 oxidized [2Fe-2S]-[ferredoxin] + S-adenosyl-L-homocysteine. It catalyses the reaction adenosine(37) in tRNA + 2 reduced [2Fe-2S]-[ferredoxin] + 2 S-adenosyl-L-methionine = 2-methyladenosine(37) in tRNA + 5'-deoxyadenosine + L-methionine + 2 oxidized [2Fe-2S]-[ferredoxin] + S-adenosyl-L-homocysteine. Its function is as follows. Specifically methylates position 2 of adenine 2503 in 23S rRNA and position 2 of adenine 37 in tRNAs. The chain is Probable dual-specificity RNA methyltransferase RlmN from Pelodictyon phaeoclathratiforme (strain DSM 5477 / BU-1).